The following is a 1493-amino-acid chain: Pleckstrin homology domain-containing family H member 2 (1493 aa).

A coiled-coil region spans residues 20–175; that stretch reads LESQLMKFRV…LQEVQGKKSS (156 aa). 4 disordered regions span residues 202–230, 245–335, 363–439, and 613–705; these read SPPQ…DMEE, NNRG…SSSI, LNSP…LPPP, and SSSP…EPLE. Residues 208–230 show a composition bias toward basic and acidic residues; that stretch reads KSEEMSKISSKEPEFTEGKDMEE. Polar residues-rich tracts occupy residues 245–260 and 267–281; these read NNRG…CGSE and TSFA…NSGA. Basic and acidic residues predominate over residues 374–388; the sequence is LSKKEQDSSSDELNK. Composition is skewed to polar residues over residues 389–409, 421–432, and 676–698; these read KFQS…TPSP, NSLSGKGTQLVP, and STDT…SSDN. PH domains are found at residues 703–797 and 811–919; these read PLEK…NVLR and KPTM…VAAG. The MyTH4 domain maps to 955-1110; it reads HSKEGIISPL…PSRMEILSTL (156 aa). The FERM domain maps to 1121–1451; it reads FSIPVHFMNG…SYINNFHQQK (331 aa). The segment at 1474 to 1493 is disordered; sequence MMGSQPLLSSSRPTKGPTLL.

Self-associates. Interacts with TGFB1I1. Kidney. Reduced expression in patients with focal segmental glomerulosclerosis.

It is found in the cytoplasm. It localises to the cytoskeleton. The protein resides in the cell membrane. The protein localises to the cell projection. Its subcellular location is the lamellipodium. Functionally, in the kidney glomerulus may play a role in linking podocyte foot processes to the glomerular basement membrane. May be involved in stabilization of F-actin by attenuating its depolymerization. Can recruit TGFB1I1 from focal adhesions to podocyte lamellipodia. The chain is Pleckstrin homology domain-containing family H member 2 (PLEKHH2) from Homo sapiens (Human).